The following is a 610-amino-acid chain: UvrABC system protein C (610 aa).

A GIY-YIG domain is found at 16–94; that stretch reads SQPGVYRMYD…IKLYQPRYNV (79 aa). In terms of domain architecture, UVR spans 204-239; that stretch reads DQVLTQLISRMETASQNLEFEEAARIRDQIQAVRRV.

The protein belongs to the UvrC family. In terms of assembly, interacts with UvrB in an incision complex.

Its subcellular location is the cytoplasm. In terms of biological role, the UvrABC repair system catalyzes the recognition and processing of DNA lesions. UvrC both incises the 5' and 3' sides of the lesion. The N-terminal half is responsible for the 3' incision and the C-terminal half is responsible for the 5' incision. The protein is UvrABC system protein C of Escherichia coli (strain ATCC 8739 / DSM 1576 / NBRC 3972 / NCIMB 8545 / WDCM 00012 / Crooks).